Consider the following 257-residue polypeptide: Thiazole synthase (257 aa).

Lysine 98 serves as the catalytic Schiff-base intermediate with DXP. 1-deoxy-D-xylulose 5-phosphate-binding positions include glycine 159, 185 to 186, and 207 to 208; these read AG and NT.

It belongs to the ThiG family. Homotetramer. Forms heterodimers with either ThiH or ThiS.

It is found in the cytoplasm. The enzyme catalyses [ThiS sulfur-carrier protein]-C-terminal-Gly-aminoethanethioate + 2-iminoacetate + 1-deoxy-D-xylulose 5-phosphate = [ThiS sulfur-carrier protein]-C-terminal Gly-Gly + 2-[(2R,5Z)-2-carboxy-4-methylthiazol-5(2H)-ylidene]ethyl phosphate + 2 H2O + H(+). It functions in the pathway cofactor biosynthesis; thiamine diphosphate biosynthesis. Catalyzes the rearrangement of 1-deoxy-D-xylulose 5-phosphate (DXP) to produce the thiazole phosphate moiety of thiamine. Sulfur is provided by the thiocarboxylate moiety of the carrier protein ThiS. In vitro, sulfur can be provided by H(2)S. In Anaeromyxobacter dehalogenans (strain 2CP-1 / ATCC BAA-258), this protein is Thiazole synthase.